Consider the following 213-residue polypeptide: uncharacterized protein (213 aa).

This is an uncharacterized protein from Magallana gigas (Pacific oyster).